A 444-amino-acid polypeptide reads, in one-letter code: Protein giant-lens (444 aa).

An N-terminal signal peptide occupies residues 1–24 (MPTTLMLLPCMLLLLLTAAAVAVG). 2 Two-fingered domain 1 part repeats span residues 123–165 (RDVR…CRCP) and 285–307 (CPSS…YKMC). 8 disulfide bridges follow: cysteine 141–cysteine 162, cysteine 147–cysteine 285, cysteine 164–cysteine 307, cysteine 316–cysteine 341, cysteine 343–cysteine 370, cysteine 378–cysteine 405, cysteine 384–cysteine 413, and cysteine 407–cysteine 440. 2 Two-fingered domain repeats span residues 316 to 370 (CTHF…LFAC) and 378 to 444 (CQRK…MAND). Asparagine 333 carries an N-linked (GlcNAc...) asparagine glycan.

As to quaternary structure, interacts with spi. As to expression, during embryogenesis, expression is in a segmental pattern in the ectoderm and in the nervous system. In the eye imaginal disks, expression in photoreceptor cells begins a few rows posterior to the morphogenetic furrow. Also expressed in the wing disk. In the adult, expression is seen in the retina and lamina.

It is found in the secreted. Its function is as follows. Regulates cell determination; development of ommatidia and optic lobe. Is a signaling molecule involved in the process of axon pathfinding in the eye. Part of the Ras pathway regulating programmed cell death in pupal eyes; activated by lozenge (lz). Antagonist for the Egfr receptor (gurken). Inhibits Egfr signaling without interacting directly with the receptor, but instead by sequestering the Egfr-activating ligand spitz (spi). The protein is Protein giant-lens (aos) of Drosophila melanogaster (Fruit fly).